Here is a 74-residue protein sequence, read N- to C-terminus: Translation initiation factor IF-1 (74 aa).

In terms of domain architecture, S1-like spans 1–72 (MSKQDLIEME…TKGRITYRLR (72 aa)).

It belongs to the IF-1 family. As to quaternary structure, component of the 30S ribosomal translation pre-initiation complex which assembles on the 30S ribosome in the order IF-2 and IF-3, IF-1 and N-formylmethionyl-tRNA(fMet); mRNA recruitment can occur at any time during PIC assembly.

It localises to the cytoplasm. Functionally, one of the essential components for the initiation of protein synthesis. Stabilizes the binding of IF-2 and IF-3 on the 30S subunit to which N-formylmethionyl-tRNA(fMet) subsequently binds. Helps modulate mRNA selection, yielding the 30S pre-initiation complex (PIC). Upon addition of the 50S ribosomal subunit IF-1, IF-2 and IF-3 are released leaving the mature 70S translation initiation complex. The chain is Translation initiation factor IF-1 from Trichodesmium erythraeum (strain IMS101).